We begin with the raw amino-acid sequence, 490 residues long: Tryptophan decarboxylase (490 aa).

The residue at position 306 (Lys306) is an N6-(pyridoxal phosphate)lysine.

Belongs to the group II decarboxylase family. In terms of assembly, homodimer. Requires pyridoxal 5'-phosphate as cofactor.

It is found in the cytoplasm. The catalysed reaction is L-tryptophan + H(+) = tryptamine + CO2. Its activity is regulated as follows. Inhibited by (S)-alpha-fluoromethyltryptophan. Its function is as follows. Catalyzes the decarboxylation of tryptophan to tryptamine. Tryptamine is a neurotransmitter that induces the release of serotonin, which is suggested to modulate gastrointestinal motility. Therefore, the tryptophan decarboxylase from the gut bacteria Ruminococcus gnavus (strain ATCC 29149 / VPI C7-9) may influence host brain and behavior. Has weak activity with tyrosine and phenylalanine. This is Tryptophan decarboxylase from Mediterraneibacter gnavus (strain ATCC 29149 / DSM 114966 / JCM 6515 / VPI C7-9) (Ruminococcus gnavus).